The sequence spans 472 residues: MAMKINTGEFHERVEKGIHNTFMRGAVAGAQERLRTRRLEAAQELGNWEEWRALGEEIRQHTLENLDYYLMQLSENVKKRGGHVFFAQTAEEANDYICRVVASKQAKKIVKSKSMVTEEIHMNAALEKLGCEVIETDLGEYILQVDDHDPPSHIVAPALHKNKEQIRDVFQQKLAYTKTEKPEELALHARAMLRQQYLTADVGITGCNFAVAESGSITLVTNEGNADLVTALPKTQITVMGMERIVPTFEEMEVLVSLLTRSAVGQKLTSYITVLTGPREEGEVDGPEEFHLVIVDNGRSDILGTEFQPVLQCIRCAACVNVCPVYRHIGGHSYGSIYSGPIGAVLSPLLGGYDDYKELPYASTLCAACTEACPVKIPLHELLLKHRQTIVEREGKAPISEKLAMKAFGLGAASSLLYKLGSKIAPTAVNPFTTNDRISKGPGPLKAWTDIREFPAPEKERFRDWLKQRGNE.

4Fe-4S ferredoxin-type domains lie at 304 to 334 and 353 to 382; these read GTEF…GHSY and YDDY…LHEL. [4Fe-4S] cluster contacts are provided by Cys-313, Cys-316, Cys-319, Cys-323, Cys-366, Cys-369, and Cys-373.

Belongs to the LutB/YkgF family.

Its function is as follows. Is involved in L-lactate degradation and allows cells to grow with lactate as the sole carbon source. Has probably a role as an electron transporter during oxidation of L-lactate. This Anoxybacillus flavithermus (strain DSM 21510 / WK1) protein is Lactate utilization protein B.